Consider the following 395-residue polypeptide: Chaperone protein DnaJ (395 aa).

Residues 5–70 (DFYEVLGVDK…NKRAAYDRMG (66 aa)) form the J domain. The CR-type zinc-finger motif lies at 145–223 (GKDETIKVPT…CDGVGRVRKT (79 aa)). Zn(2+) contacts are provided by Cys158, Cys161, Cys175, Cys178, Cys197, Cys200, Cys211, and Cys214. 4 CXXCXGXG motif repeats span residues 158–165 (CERCDGQG), 175–182 (CGTCQGAG), 197–204 (CPQCGGRG), and 211–218 (CNDCDGVG).

Belongs to the DnaJ family. Homodimer. Zn(2+) serves as cofactor.

It localises to the cytoplasm. In terms of biological role, participates actively in the response to hyperosmotic and heat shock by preventing the aggregation of stress-denatured proteins and by disaggregating proteins, also in an autonomous, DnaK-independent fashion. Unfolded proteins bind initially to DnaJ; upon interaction with the DnaJ-bound protein, DnaK hydrolyzes its bound ATP, resulting in the formation of a stable complex. GrpE releases ADP from DnaK; ATP binding to DnaK triggers the release of the substrate protein, thus completing the reaction cycle. Several rounds of ATP-dependent interactions between DnaJ, DnaK and GrpE are required for fully efficient folding. Also involved, together with DnaK and GrpE, in the DNA replication of plasmids through activation of initiation proteins. This chain is Chaperone protein DnaJ, found in Maricaulis maris (strain MCS10) (Caulobacter maris).